A 383-amino-acid chain; its full sequence is Cytochrome b (383 aa).

Helical transmembrane passes span phenylalanine 34 to methionine 54, tryptophan 78 to isoleucine 99, tryptophan 114 to leucine 134, and phenylalanine 179 to isoleucine 199. The heme b site is built by histidine 84 and histidine 98. 2 residues coordinate heme b: histidine 183 and histidine 197. Histidine 202 contacts a ubiquinone. A run of 4 helical transmembrane segments spans residues methionine 227–leucine 247, leucine 289–histidine 309, leucine 321–glycine 341, and tyrosine 348–proline 368.

The protein belongs to the cytochrome b family. The cytochrome bc1 complex contains 3 respiratory subunits (MT-CYB, CYC1 and UQCRFS1), 2 core proteins (UQCRC1 and UQCRC2) and probably 6 low-molecular weight proteins. It depends on heme b as a cofactor.

The protein resides in the mitochondrion inner membrane. Component of the ubiquinol-cytochrome c reductase complex (complex III or cytochrome b-c1 complex) that is part of the mitochondrial respiratory chain. The b-c1 complex mediates electron transfer from ubiquinol to cytochrome c. Contributes to the generation of a proton gradient across the mitochondrial membrane that is then used for ATP synthesis. The protein is Cytochrome b (MT-CYB) of Caiman crocodilus (Spectacled caiman).